We begin with the raw amino-acid sequence, 160 residues long: Type IV major fimbrial protein FimA (160 aa).

Positions 1–7 (MKSLQKG) are cleaved as a propeptide — leader sequence. At F8 the chain carries N-methylphenylalanine. Residues 8 to 28 (FTLIELMIVVAIIGILAAFAI) form a helical membrane-spanning segment. The cysteines at positions 63 and 105 are disulfide-linked.

It belongs to the N-Me-Phe pilin family. In terms of assembly, the pili are polar flexible filaments of about 5.4 nanometers diameter and 2.5 micrometers average length; they consist of only a single polypeptide chain arranged in a helical configuration of five subunits per turn in the assembled pilus.

Its subcellular location is the fimbrium. The protein localises to the membrane. Functionally, major component of the type IV fimbriae that plays an essential role in twitching motility, natural transformation, and protease secretion. This chain is Type IV major fimbrial protein FimA (fimA), found in Dichelobacter nodosus (Bacteroides nodosus).